Here is a 272-residue protein sequence, read N- to C-terminus: Cyanophycinase (272 aa).

Residues serine 132, glutamate 150, and histidine 174 each act as charge relay system in the active site.

It belongs to the peptidase S51 family.

It carries out the reaction [L-4-(L-arginin-2-N-yl)aspartate](n) + H2O = [L-4-(L-arginin-2-N-yl)aspartate](n-1) + L-4-(L-arginin-2-N-yl)aspartate. Exopeptidase that catalyzes the hydrolytic cleavage of multi-L-arginyl-poly-L-aspartic acid (cyanophycin; a water-insoluble reserve polymer) into aspartate-arginine dipeptides. The protein is Cyanophycinase (cphB) of Geminocystis herdmanii (strain PCC 6308) (Synechocystis sp. (strain PCC 6308)).